Consider the following 975-residue polypeptide: Glycine dehydrogenase (decarboxylating) (975 aa).

Lysine 702 bears the N6-(pyridoxal phosphate)lysine mark.

This sequence belongs to the GcvP family. As to quaternary structure, the glycine cleavage system is composed of four proteins: P, T, L and H. Requires pyridoxal 5'-phosphate as cofactor.

The enzyme catalyses N(6)-[(R)-lipoyl]-L-lysyl-[glycine-cleavage complex H protein] + glycine + H(+) = N(6)-[(R)-S(8)-aminomethyldihydrolipoyl]-L-lysyl-[glycine-cleavage complex H protein] + CO2. Its function is as follows. The glycine cleavage system catalyzes the degradation of glycine. The P protein binds the alpha-amino group of glycine through its pyridoxal phosphate cofactor; CO(2) is released and the remaining methylamine moiety is then transferred to the lipoamide cofactor of the H protein. The chain is Glycine dehydrogenase (decarboxylating) from Xanthomonas campestris pv. campestris (strain 8004).